The chain runs to 70 residues: Translational regulator CsrA (70 aa).

Belongs to the CsrA/RsmA family. Homodimer; the beta-strands of each monomer intercalate to form a hydrophobic core, while the alpha-helices form wings that extend away from the core.

The protein resides in the cytoplasm. In terms of biological role, a key translational regulator that binds mRNA to regulate translation initiation and/or mRNA stability. Mediates global changes in gene expression, shifting from rapid growth to stress survival by linking envelope stress, the stringent response and the catabolite repression systems. Usually binds in the 5'-UTR; binding at or near the Shine-Dalgarno sequence prevents ribosome-binding, repressing translation, binding elsewhere in the 5'-UTR can activate translation and/or stabilize the mRNA. Its function is antagonized by small RNA(s). The protein is Translational regulator CsrA of Hydrogenovibrio crunogenus (strain DSM 25203 / XCL-2) (Thiomicrospira crunogena).